Reading from the N-terminus, the 71-residue chain is MVPPVQVSPLIKFGRYSALIIGMAYGAKRYSYLKPRAEEERRIAAEEKKRLDELKRIERELAEAQDDSILK.

An N6-acetyllysine modification is found at lysine 34. Serine 68 is subject to Phosphoserine.

It belongs to the ATPase e subunit family. Component of the ATP synthase complex composed at least of ATP5F1A/subunit alpha, ATP5F1B/subunit beta, ATP5MC1/subunit c (homooctomer), MT-ATP6/subunit a, MT-ATP8/subunit 8, ATP5ME/subunit e, ATP5MF/subunit f, ATP5MG/subunit g, ATP5MK/subunit k, ATP5MJ/subunit j, ATP5F1C/subunit gamma, ATP5F1D/subunit delta, ATP5F1E/subunit epsilon, ATP5PF/subunit F6, ATP5PB/subunit b, ATP5PD/subunit d, ATP5PO/subunit OSCP. ATP synthase complex consists of a soluble F(1) head domain (subunits alpha(3) and beta(3)) - the catalytic core - and a membrane F(0) domain - the membrane proton channel (subunits c, a, 8, e, f, g, k and j). These two domains are linked by a central stalk (subunits gamma, delta, and epsilon) rotating inside the F1 region and a stationary peripheral stalk (subunits F6, b, d, and OSCP). Mammary gland, liver, kidney, heart, spleen, brain and lung.

The protein localises to the mitochondrion. It localises to the mitochondrion inner membrane. Its function is as follows. Subunit e, of the mitochondrial membrane ATP synthase complex (F(1)F(0) ATP synthase or Complex V) that produces ATP from ADP in the presence of a proton gradient across the membrane which is generated by electron transport complexes of the respiratory chain. ATP synthase complex consist of a soluble F(1) head domain - the catalytic core - and a membrane F(1) domain - the membrane proton channel. These two domains are linked by a central stalk rotating inside the F(1) region and a stationary peripheral stalk. During catalysis, ATP synthesis in the catalytic domain of F(1) is coupled via a rotary mechanism of the central stalk subunits to proton translocation. In vivo, can only synthesize ATP although its ATP hydrolase activity can be activated artificially in vitro. Part of the complex F(0) domain. This chain is ATP synthase F(0) complex subunit e, mitochondrial, found in Mus musculus (Mouse).